The following is a 642-amino-acid chain: Serotransferrin (642 aa).

Transferrin-like domains lie at 1 to 280 (GIKE…SLKK) and 290 to 621 (IKWC…SLRQ). Fe(3+) is bound by residues Asp25 and Tyr54. Disulfide bonds link Cys77/Cys158, Cys121/Cys137, and Cys186/Cys200. Thr79, Lys83, Ala85, and Gly86 together coordinate hydrogencarbonate. Residue Tyr152 participates in Fe(3+) binding. Position 208 (His208) interacts with Fe(3+). 2 disulfides stabilise this stretch: Cys293–Cys329 and Cys303–Cys320. Asp344 contributes to the Fe(3+) binding site. Disulfide bonds link Cys354/Cys633, Cys369/Cys594, Cys402/Cys480, Cys426/Cys622, Cys436/Cys450, Cys447/Cys463, and Cys520/Cys535. Asn365 is a glycosylation site (N-linked (GlcNAc...) asparagine). Fe(3+) is bound at residue Tyr379. Thr404, Arg408, Ala410, and Gly411 together coordinate hydrogencarbonate. Position 474 (Tyr474) interacts with Fe(3+). Residue His543 participates in Fe(3+) binding.

It belongs to the transferrin family. Monomer. Brain and liver; to a lesser extent in kidney and heart.

The protein localises to the secreted. Transferrins are iron binding transport proteins which can bind two Fe(3+) ions in association with the binding of an anion, usually bicarbonate. The polypeptide is Serotransferrin (tf) (Gadus morhua (Atlantic cod)).